The following is a 159-amino-acid chain: Ribosomal RNA large subunit methyltransferase H (159 aa).

Residues Leu76, Gly108, and 127 to 132 contribute to the S-adenosyl-L-methionine site; that span reads FSKMTL.

Belongs to the RNA methyltransferase RlmH family. As to quaternary structure, homodimer.

The protein resides in the cytoplasm. It catalyses the reaction pseudouridine(1915) in 23S rRNA + S-adenosyl-L-methionine = N(3)-methylpseudouridine(1915) in 23S rRNA + S-adenosyl-L-homocysteine + H(+). Functionally, specifically methylates the pseudouridine at position 1915 (m3Psi1915) in 23S rRNA. This is Ribosomal RNA large subunit methyltransferase H from Bacillus cytotoxicus (strain DSM 22905 / CIP 110041 / 391-98 / NVH 391-98).